The sequence spans 302 residues: UDP-3-O-acyl-N-acetylglucosamine deacetylase (302 aa).

Zn(2+) contacts are provided by H78, H235, and D239. H262 serves as the catalytic Proton donor.

Belongs to the LpxC family. Zn(2+) serves as cofactor.

The enzyme catalyses a UDP-3-O-[(3R)-3-hydroxyacyl]-N-acetyl-alpha-D-glucosamine + H2O = a UDP-3-O-[(3R)-3-hydroxyacyl]-alpha-D-glucosamine + acetate. It functions in the pathway glycolipid biosynthesis; lipid IV(A) biosynthesis; lipid IV(A) from (3R)-3-hydroxytetradecanoyl-[acyl-carrier-protein] and UDP-N-acetyl-alpha-D-glucosamine: step 2/6. Functionally, catalyzes the hydrolysis of UDP-3-O-myristoyl-N-acetylglucosamine to form UDP-3-O-myristoylglucosamine and acetate, the committed step in lipid A biosynthesis. This is UDP-3-O-acyl-N-acetylglucosamine deacetylase from Bdellovibrio bacteriovorus (strain ATCC 15356 / DSM 50701 / NCIMB 9529 / HD100).